A 60-amino-acid chain; its full sequence is Small ribosomal subunit protein bS21 (60 aa).

A disordered region spans residues 38 to 60 (KGVKRREKEKAARKRLQKKHRMY).

This sequence belongs to the bacterial ribosomal protein bS21 family.

In Mycoplasmoides gallisepticum (strain R(low / passage 15 / clone 2)) (Mycoplasma gallisepticum), this protein is Small ribosomal subunit protein bS21.